A 398-amino-acid chain; its full sequence is Acetate kinase (398 aa).

Asparagine 9 is a Mg(2+) binding site. Lysine 16 lines the ATP pocket. Arginine 89 is a substrate binding site. The Proton donor/acceptor role is filled by aspartate 146. ATP is bound by residues 206-210 (HLGNG), 281-283 (DCR), and 329-333 (GIGEN). Glutamate 384 contributes to the Mg(2+) binding site.

This sequence belongs to the acetokinase family. Homodimer. Mg(2+) is required as a cofactor. Requires Mn(2+) as cofactor.

Its subcellular location is the cytoplasm. It carries out the reaction acetate + ATP = acetyl phosphate + ADP. The protein operates within metabolic intermediate biosynthesis; acetyl-CoA biosynthesis; acetyl-CoA from acetate: step 1/2. Catalyzes the formation of acetyl phosphate from acetate and ATP. Can also catalyze the reverse reaction. The chain is Acetate kinase from Vibrio campbellii (strain ATCC BAA-1116).